The sequence spans 261 residues: Zinc finger protein 664 (261 aa).

9 consecutive C2H2-type zinc fingers follow at residues 3–25 (YKCPMCREFFSERADLFMHQKVH), 31–53 (HKCDKCDKGFFHISELHIHWRDH), 59–81 (YKCDDCGKDFSTTTKLNRHKKIH), 87–109 (YKCYECGKAFNWSPHLQIHMRVH), 115–137 (YVCSECGRGFSNSSNLCMHQRVH), 143–165 (FKCEECGKAFRHTSSLCMHQRVH), 171–193 (YKCYECGKAFSQSSSLCIHQRVH), 199–221 (YRCCGCGKAFSQSSSLCIHQRVH), and 227–249 (FKCDECGKAFSQSTSLCIHQRVH). A Glycyl lysine isopeptide (Lys-Gly) (interchain with G-Cter in SUMO2) cross-link involves residue Lys-257.

This sequence belongs to the krueppel C2H2-type zinc-finger protein family. As to expression, expressed in the organ of Corti, stria vascularis, auditory nerve and retina. Lower levels in the tongue, cerebellum, small intestine and kidney.

It is found in the nucleus. Functionally, may be involved in transcriptional regulation. In Cavia porcellus (Guinea pig), this protein is Zinc finger protein 664 (ZNF664).